A 497-amino-acid polypeptide reads, in one-letter code: Guanosine-5'-triphosphate,3'-diphosphate pyrophosphatase (497 aa).

It belongs to the GppA/Ppx family. GppA subfamily.

It carries out the reaction guanosine 3'-diphosphate 5'-triphosphate + H2O = guanosine 3',5'-bis(diphosphate) + phosphate + H(+). It participates in purine metabolism; ppGpp biosynthesis; ppGpp from GTP: step 2/2. Catalyzes the conversion of pppGpp to ppGpp. Guanosine pentaphosphate (pppGpp) is a cytoplasmic signaling molecule which together with ppGpp controls the 'stringent response', an adaptive process that allows bacteria to respond to amino acid starvation, resulting in the coordinated regulation of numerous cellular activities. This is Guanosine-5'-triphosphate,3'-diphosphate pyrophosphatase from Vibrio parahaemolyticus serotype O3:K6 (strain RIMD 2210633).